Reading from the N-terminus, the 32-residue chain is GSPRQCAETCFIGKCYTEELGCTCTAFLCMKN.

Residues 1–32 (GSPRQCAETCFIGKCYTEELGCTCTAFLCMKN) constitute a cross-link (cyclopeptide (Gly-Asn)). 3 disulfide bridges follow: C6–C22, C10–C24, and C15–C29.

Belongs to the cyclotide family. Moebius subfamily. Post-translationally, this is a cyclic peptide.

In terms of biological role, probably participates in a plant defense mechanism. The chain is Cyclotide Hyfl-C from Hybanthus floribundus (Greenviolet).